Here is a 483-residue protein sequence, read N- to C-terminus: Proline--tRNA ligase (483 aa).

This sequence belongs to the class-II aminoacyl-tRNA synthetase family. ProS type 3 subfamily. In terms of assembly, homodimer.

It localises to the cytoplasm. It catalyses the reaction tRNA(Pro) + L-proline + ATP = L-prolyl-tRNA(Pro) + AMP + diphosphate. Its function is as follows. Catalyzes the attachment of proline to tRNA(Pro) in a two-step reaction: proline is first activated by ATP to form Pro-AMP and then transferred to the acceptor end of tRNA(Pro). In Mycoplasma genitalium (strain ATCC 33530 / DSM 19775 / NCTC 10195 / G37) (Mycoplasmoides genitalium), this protein is Proline--tRNA ligase.